The following is a 219-amino-acid chain: Uracil-DNA glycosylase (219 aa).

Asp-63 serves as the catalytic Proton acceptor.

This sequence belongs to the uracil-DNA glycosylase (UDG) superfamily. UNG family.

The protein resides in the cytoplasm. The enzyme catalyses Hydrolyzes single-stranded DNA or mismatched double-stranded DNA and polynucleotides, releasing free uracil.. Excises uracil residues from the DNA which can arise as a result of misincorporation of dUMP residues by DNA polymerase or due to deamination of cytosine. This Mesomycoplasma hyopneumoniae (strain 7448) (Mycoplasma hyopneumoniae) protein is Uracil-DNA glycosylase.